Here is a 339-residue protein sequence, read N- to C-terminus: Phosphoribosylformylglycinamidine cyclo-ligase (339 aa).

It belongs to the AIR synthase family.

The protein resides in the cytoplasm. It carries out the reaction 2-formamido-N(1)-(5-O-phospho-beta-D-ribosyl)acetamidine + ATP = 5-amino-1-(5-phospho-beta-D-ribosyl)imidazole + ADP + phosphate + H(+). It functions in the pathway purine metabolism; IMP biosynthesis via de novo pathway; 5-amino-1-(5-phospho-D-ribosyl)imidazole from N(2)-formyl-N(1)-(5-phospho-D-ribosyl)glycinamide: step 2/2. The polypeptide is Phosphoribosylformylglycinamidine cyclo-ligase (Streptococcus thermophilus (strain ATCC BAA-491 / LMD-9)).